The chain runs to 250 residues: Probable transcriptional regulatory protein MAP_1030 (250 aa).

The protein belongs to the TACO1 family.

Its subcellular location is the cytoplasm. The sequence is that of Probable transcriptional regulatory protein MAP_1030 from Mycolicibacterium paratuberculosis (strain ATCC BAA-968 / K-10) (Mycobacterium paratuberculosis).